The following is a 335-amino-acid chain: Phospho-N-acetylmuramoyl-pentapeptide-transferase (335 aa).

10 helical membrane-spanning segments follow: residues L3–I23, G53–F73, S78–L98, L118–I138, V143–V163, I175–I195, Y200–N220, V226–A246, W251–V271, and V314–Y334.

This sequence belongs to the glycosyltransferase 4 family. MraY subfamily. Requires Mg(2+) as cofactor.

It localises to the cell membrane. It catalyses the reaction UDP-N-acetyl-alpha-D-muramoyl-L-alanyl-gamma-D-glutamyl-L-lysyl-D-alanyl-D-alanine + di-trans,octa-cis-undecaprenyl phosphate = Mur2Ac(oyl-L-Ala-gamma-D-Glu-L-Lys-D-Ala-D-Ala)-di-trans,octa-cis-undecaprenyl diphosphate + UMP. It functions in the pathway cell wall biogenesis; peptidoglycan biosynthesis. Its function is as follows. Catalyzes the initial step of the lipid cycle reactions in the biosynthesis of the cell wall peptidoglycan: transfers peptidoglycan precursor phospho-MurNAc-pentapeptide from UDP-MurNAc-pentapeptide onto the lipid carrier undecaprenyl phosphate, yielding undecaprenyl-pyrophosphoryl-MurNAc-pentapeptide, known as lipid I. The protein is Phospho-N-acetylmuramoyl-pentapeptide-transferase of Streptococcus uberis (strain ATCC BAA-854 / 0140J).